A 117-amino-acid polypeptide reads, in one-letter code: Ribosome-binding factor A (117 aa).

This sequence belongs to the RbfA family. In terms of assembly, monomer. Binds 30S ribosomal subunits, but not 50S ribosomal subunits or 70S ribosomes.

The protein localises to the cytoplasm. One of several proteins that assist in the late maturation steps of the functional core of the 30S ribosomal subunit. Associates with free 30S ribosomal subunits (but not with 30S subunits that are part of 70S ribosomes or polysomes). Required for efficient processing of 16S rRNA. May interact with the 5'-terminal helix region of 16S rRNA. The polypeptide is Ribosome-binding factor A (Anaplasma marginale (strain St. Maries)).